We begin with the raw amino-acid sequence, 667 residues long: MSEAISLTFPDGSVRSYPAGTTGREVAESISKSLAKKAVAIALDGTVRDLSETITDGKIEIVTREDGRALELIRHDAAHVMAEAVQELWPGTQVTIGPVIENGFYYDFAKNEPFTPEDLPKIEKRMKEIIQRNKPFTREIWSREKAKEVFAAKGENYKVELVDAIPEGQDLKIYYQGDWFDLCRGPHMASTGQIGTAFKLMKVAGAYWRGDSNNAMLSRIYGTAWATQEELDNYLHVLAEAEKRDHRRLGREMDLFHFQEEGPGVVFWHGKGWRMFQTLTAYMRRRLANTYQEVNAPQVLDKSLWETSGHWGWYQENMFAVKSAHAFTHPDDKEADQRVFALKPMNCPGHVQIFKHGLKSYREMPVRLAEFGNVHRYEASGALHGLMRVRGFTQDDAHVFCTEEQMAAECLRINDLILSVYEDFGFSEIVVKLSTRPEKRVGSDDLWDRAESVMLEVLKTIEEQSGGRIKTGILPGEGAFYGPKFEYTLKDAIGREWQCGTTQVDFNLPERFGAFYIDQNSEKTQPVMIHRAICGSMERFLGILIENFAGHMPLWFAPLQVVVATITSDADDYGREVAEALREAGMAVETDFRNEKINYKVREHSVTKVPVIIVCGRKEAEERTVNIRRLGSQNQTSMSLEEAITSLVDEATPPDVKRKLAAKKQLA.

The TGS domain maps to 1–64 (MSEAISLTFP…TDGKIEIVTR (64 aa)). A catalytic region spans residues 245 to 553 (DHRRLGREMD…LIENFAGHMP (309 aa)). Zn(2+) contacts are provided by Cys347, His398, and His530.

This sequence belongs to the class-II aminoacyl-tRNA synthetase family. Homodimer. Zn(2+) serves as cofactor.

Its subcellular location is the cytoplasm. The catalysed reaction is tRNA(Thr) + L-threonine + ATP = L-threonyl-tRNA(Thr) + AMP + diphosphate + H(+). Catalyzes the attachment of threonine to tRNA(Thr) in a two-step reaction: L-threonine is first activated by ATP to form Thr-AMP and then transferred to the acceptor end of tRNA(Thr). Also edits incorrectly charged L-seryl-tRNA(Thr). This is Threonine--tRNA ligase from Agrobacterium fabrum (strain C58 / ATCC 33970) (Agrobacterium tumefaciens (strain C58)).